We begin with the raw amino-acid sequence, 149 residues long: Oocyte-expressed protein homolog (149 aa).

Residues 1–22 (MVDDAGAAESQRGKQTPAHSLE) form a disordered region. Residues 49–110 (PLVFYLEAWL…RVQNRVKSML (62 aa)) form the KH; atypical domain.

The protein belongs to the KHDC1 family. Component of the subcortical maternal complex (SCMC), at least composed of NLRP5, KHDC3L, OOEP, and TLE6 isoform 1. Within the complex, interacts with NLRP5, KHDC3L and TLE6 isoform 1. As part of the SCMC interacts with the SCMC-associated protein NLRP4F. The SCMC may facilitate translocation of its components between the nuclear and cytoplasmic compartments. Forms a scaffold complex with KHDC3L/FILIA, and interacts with BLM and TRIM25 at DNA replication forks.

The protein resides in the cytoplasm. It is found in the nucleus. Functionally, component of the subcortical maternal complex (SCMC), a multiprotein complex that plays a key role in early embryonic development. The SCMC complex is a structural constituent of cytoplasmic lattices, which consist in fibrous structures found in the cytoplasm of oocytes and preimplantation embryos. They are required to store maternal proteins critical for embryonic development, such as proteins that control epigenetic reprogramming of the preimplantation embryo, and prevent their degradation or activation. As part of the OOEP-KHDC3 scaffold, recruits BLM and TRIM25 to DNA replication forks, thereby promoting the ubiquitination of BLM by TRIM25, enhancing BLM retainment at replication forks and therefore promoting stalled replication fork restart. Positively regulates the homologous recombination-mediated DNA double-strand break (DSB) repair pathway by regulating ATM activation and RAD51 recruitment to DSBs in oocytes. Thereby contributes to oocyte survival and the resumption and completion of meiosis. The sequence is that of Oocyte-expressed protein homolog from Homo sapiens (Human).